The sequence spans 85 residues: Putative membrane protein insertion efficiency factor (85 aa).

It belongs to the UPF0161 family.

It localises to the cell inner membrane. Its function is as follows. Could be involved in insertion of integral membrane proteins into the membrane. This Vibrio cholerae serotype O1 (strain ATCC 39315 / El Tor Inaba N16961) protein is Putative membrane protein insertion efficiency factor.